Reading from the N-terminus, the 410-residue chain is Caspase-1 (410 aa).

The CARD domain maps to 1 to 91; it reads MADKVLKGKR…HLAETLGLSS (91 aa). Positions 1-119 are excised as a propeptide; sequence MADKVLKGKR…PLPASVNNMP (119 aa). A compositionally biased stretch (polar residues) spans 88-104; the sequence is GLSSSPQSGNSQNTTDS. The tract at residues 88–125 is disordered; sequence GLSSSPQSGNSQNTTDSEVAFPPLPASVNNMPGPAEPE. Active-site residues include His-235 and Cys-284. The propeptide occupies 297–322; that stretch reads SPAAPMDSTSQMGSSLSQVGDNLEDD.

This sequence belongs to the peptidase C14A family. As to quaternary structure, heterotetramer that consists of two anti-parallel arranged heterodimers, each one formed by a 20 kDa (Caspase-1 subunit p20) and a 10 kDa (Caspase-1 subunit p10) subunit. May be a component of the inflammasome, a protein complex which also includes PYCARD, CARD8 and NLRP2 and whose function would be the activation of pro-inflammatory caspases. Component of the AIM2 PANoptosome complex, a multiprotein complex that drives inflammatory cell death (PANoptosis). Both the p10 and p20 subunits interact with MEFV. Interacts with CARD17P/INCA and CARD18. Interacts with SERPINB1; this interaction regulates CASP1 activity. In terms of assembly, heterotetramer that consists of two anti-parallel arranged heterodimers, each one formed by a 20 kDa (Caspase-1 subunit p20) and a 10 kDa (Caspase-1 subunit p10) subunit. Post-translationally, the two subunits are derived from the precursor sequence by an autocatalytic mechanism. In terms of processing, ubiquitinated via 'Lys-11'-linked polyubiquitination. Deubiquitinated by USP8.

It localises to the cytoplasm. The protein resides in the cell membrane. It carries out the reaction Strict requirement for an Asp residue at position P1 and has a preferred cleavage sequence of Tyr-Val-Ala-Asp-|-.. In terms of biological role, thiol protease involved in a variety of inflammatory processes by proteolytically cleaving other proteins, such as the precursors of the inflammatory cytokines interleukin-1 beta (IL1B) and interleukin 18 (IL18) as well as the pyroptosis inducer Gasdermin-D (GSDMD), into active mature peptides. Plays a key role in cell immunity as an inflammatory response initiator: once activated through formation of an inflammasome complex, it initiates a pro-inflammatory response through the cleavage of the two inflammatory cytokines IL1B and IL18, releasing the mature cytokines which are involved in a variety of inflammatory processes. Cleaves a tetrapeptide after an Asp residue at position P1. Also initiates pyroptosis, a programmed lytic cell death pathway, through cleavage of GSDMD. In contrast to cleavage of interleukin IL1B, recognition and cleavage of GSDMD is not strictly dependent on the consensus cleavage site but depends on an exosite interface on CASP1 that recognizes and binds the Gasdermin-D, C-terminal (GSDMD-CT) part. Cleaves and activates CASP7 in response to bacterial infection, promoting plasma membrane repair. Upon inflammasome activation, during DNA virus infection but not RNA virus challenge, controls antiviral immunity through the cleavage of CGAS, rendering it inactive. In apoptotic cells, cleaves SPHK2 which is released from cells and remains enzymatically active extracellularly. This is Caspase-1 (CASP1) from Felis catus (Cat).